Consider the following 298-residue polypeptide: Elongation factor Ts (298 aa).

The involved in Mg(2+) ion dislocation from EF-Tu stretch occupies residues 79–82 (TDFV).

The protein belongs to the EF-Ts family.

It localises to the cytoplasm. Associates with the EF-Tu.GDP complex and induces the exchange of GDP to GTP. It remains bound to the aminoacyl-tRNA.EF-Tu.GTP complex up to the GTP hydrolysis stage on the ribosome. The protein is Elongation factor Ts of Cereibacter sphaeroides (strain ATCC 17029 / ATH 2.4.9) (Rhodobacter sphaeroides).